The chain runs to 180 residues: GTP cyclohydrolase 1 (180 aa).

Residues Cys-71, His-74, and Cys-142 each coordinate Zn(2+).

This sequence belongs to the GTP cyclohydrolase I family. In terms of assembly, toroid-shaped homodecamer, composed of two pentamers of five dimers.

It carries out the reaction GTP + H2O = 7,8-dihydroneopterin 3'-triphosphate + formate + H(+). It participates in cofactor biosynthesis; 7,8-dihydroneopterin triphosphate biosynthesis; 7,8-dihydroneopterin triphosphate from GTP: step 1/1. The sequence is that of GTP cyclohydrolase 1 from Helicobacter pylori (strain HPAG1).